The primary structure comprises 166 residues: PTS system glucose-specific EIIA component (166 aa).

In terms of domain architecture, PTS EIIA type-1 spans 34–138 (DPVFAQKMMG…SVISPIIITN (105 aa)). Zn(2+) is bound by residues histidine 71 and histidine 86. Residue histidine 86 is the Tele-phosphohistidine intermediate; for EIIA activity of the active site. Histidine 86 is modified (phosphohistidine; by HPr).

In terms of assembly, heterodimer with glycerol kinase (glpk). Requires Zn(2+) as cofactor.

It localises to the cytoplasm. In terms of biological role, the phosphoenolpyruvate-dependent sugar phosphotransferase system (sugar PTS), a major carbohydrate active transport system, catalyzes the phosphorylation of incoming sugar substrates concomitantly with their translocation across the cell membrane. The enzyme II complex composed of PtsG and Crr is involved in glucose transport. The polypeptide is PTS system glucose-specific EIIA component (crr) (Staphylococcus aureus (strain MRSA252)).